The primary structure comprises 231 residues: GTP-binding protein RHO3 (231 aa).

23-30 serves as a coordination point for GTP; it reads GDGACGKT. The short motif at 45–53 is the Effector region element; sequence YEPTVFENY. Residues 70–74 and 128–131 contribute to the GTP site; these read DTAGQ and LKCD. Residues 139-150 are compositionally biased toward polar residues; the sequence is SNAITPNNIQQD. A disordered region spans residues 139 to 165; sequence SNAITPNNIQQDNSVSNDNGNNINSTS. A compositionally biased stretch (low complexity) spans 151–165; that stretch reads NSVSNDNGNNINSTS. Position 228 is a cysteine methyl ester (cysteine 228). The S-farnesyl cysteine moiety is linked to residue cysteine 228. The propeptide at 229–231 is removed in mature form; that stretch reads TIM.

Belongs to the small GTPase superfamily. Rho family. Interacts with TOS7.

The protein localises to the cell membrane. Its activity is regulated as follows. Activity is positively regulated by the GTPase activating protein (GAP) RGD1. Functionally, plays an important role in cell growth. Required to keep the uninucleated state. Modulates morphogenesis during bud growth via directing organization of the actin cytoskeleton and the position of the secretory machinery for exocytosis. The protein is GTP-binding protein RHO3 of Saccharomyces cerevisiae (strain ATCC 204508 / S288c) (Baker's yeast).